We begin with the raw amino-acid sequence, 1158 residues long: Nuclear receptor-interacting protein 1 (1158 aa).

An interaction with ZNF366 region spans residues 1–415 (MTHGEELGSD…EESSTPTTID (415 aa)). The LXXLL motif 1 motif lies at 21 to 25 (LEGLL). The interval 33-56 (SGTAVDKKSAGHNEEDQNFNISGS) is disordered. The segment covering 37–47 (VDKKSAGHNEE) has biased composition (basic and acidic residues). Positions 78–333 (MLHLKKARLL…HLNGQARTSS (256 aa)) are repression domain 1. Ser-104 bears the Phosphoserine mark. An N6-acetyllysine; alternate modification is found at Lys-111. A Glycyl lysine isopeptide (Lys-Gly) (interchain with G-Cter in SUMO2); alternate cross-link involves residue Lys-111. The LXXLL motif 2 signature appears at 133-137 (LASLL). Residue Lys-158 is modified to N6-acetyllysine. Lys-170 participates in a covalent cross-link: Glycyl lysine isopeptide (Lys-Gly) (interchain with G-Cter in SUMO2). An LXXLL motif 3 motif is present at residues 185–189 (LKTLL). Glycyl lysine isopeptide (Lys-Gly) (interchain with G-Cter in SUMO2) cross-links involve residues Lys-195 and Lys-198. Thr-207 is subject to Phosphothreonine. Ser-218 bears the Phosphoserine mark. The LXXLL motif 4 signature appears at 266 to 270 (LALLL). N6-acetyllysine occurs at positions 286 and 310. Ser-356 carries the post-translational modification Phosphoserine. Residue Lys-372 forms a Glycyl lysine isopeptide (Lys-Gly) (interchain with G-Cter in SUMO2) linkage. Ser-378 is subject to Phosphoserine. Residues 380–384 (LLHLL) carry the LXXLL motif 5 motif. Positions 393–435 (MNGHSHSERGSIFEESSTPTTIDEYSDNNPSFTDDSSGDESSY) are disordered. The segment covering 406–435 (EESSTPTTIDEYSDNNPSFTDDSSGDESSY) has biased composition (polar residues). A repression domain 2 region spans residues 410–700 (TPTTIDEYSD…PTGPEPGLSG (291 aa)). Residues 431-472 (DESSYSNCVPIDLSCKHRTEKSESDQPVSLDNFTQSLLNTWD) are required for targeting to small nuclear foci. A CTBP-binding; principal site motif is present at residues 440-446 (PIDLSCK). 2 positions are modified to N6-acetyllysine: Lys-446 and Lys-481. Ser-487 carries the post-translational modification Phosphoserine. The LXXLL motif 6 motif lies at 500–504 (LLQLL). A Glycyl lysine isopeptide (Lys-Gly) (interchain with G-Cter in SUMO2) cross-link involves residue Lys-508. At Ser-518 the chain carries Phosphoserine. Lys-528 is subject to N6-acetyllysine. A disordered region spans residues 540–563 (IESPSTNRTTPVSTPPLLTSSKAG). Residue Ser-542 is modified to Phosphoserine. The segment covering 548–560 (TTPVSTPPLLTSS) has biased composition (low complexity). Ser-564 is subject to Phosphoserine. Short sequence motifs (CTBP-binding) lie at residues 565–569 (PINLS) and 599–603 (SMDLT). 2 disordered regions span residues 592 to 622 (TNTA…AQNS) and 641 to 663 (SSMS…DKPI). A compositionally biased stretch (basic and acidic residues) spans 601–610 (DLTKSKDPPG). Lys-606 is modified (N6-acetyllysine). Positions 641-659 (SSMSVEEQRPSKQLLTGNT) are enriched in polar residues. A Phosphoserine modification is found at Ser-671. An LXXLL motif 7 motif is present at residues 713 to 717 (LQLLL). The tract at residues 716-745 (LLGNPNKGKSEKKEKTPLRDESTQEHSERA) is disordered. The segment covering 723–745 (GKSEKKEKTPLRDESTQEHSERA) has biased composition (basic and acidic residues). A repression domain 3 region spans residues 735–885 (DESTQEHSER…NIVDAANNHS (151 aa)). Residues 753–1158 (VKIKSEPCDD…SVLTIKKESE (406 aa)) are interaction with ZNF366. Residues Lys-756 and Lys-802 each participate in a glycyl lysine isopeptide (Lys-Gly) (interchain with G-Cter in SUMO2) cross-link. At Ser-807 the chain carries Phosphoserine. The short motif at 819–823 (LSRLL) is the LXXLL motif 8 element. Glycyl lysine isopeptide (Lys-Gly) (interchain with G-Cter in SUMO2) cross-links involve residues Lys-850 and Lys-901. The residue at position 931 (Lys-931) is an N6-acetyllysine; alternate. A Glycyl lysine isopeptide (Lys-Gly) (interchain with G-Cter in SUMO2); alternate cross-link involves residue Lys-931. An LXXLL motif 9 motif is present at residues 936–940 (LKQLL). The short motif at 946 to 950 (VRDLS) is the CTBP-binding element. The disordered stretch occupies residues 950–974 (SPHRSNSVADSKKKGHKNNVTNSKP). Phosphoserine is present on Ser-1001. A Ligand-dependent nuclear receptor binding motif is present at residues 1061 to 1074 (LTKTNPILYYMLQK). Glycyl lysine isopeptide (Lys-Gly) (interchain with G-Cter in SUMO2) cross-links involve residues Lys-1105, Lys-1115, and Lys-1154. Residues 1118–1158 (FFNLRSPYNSHMGNNASRPHSANGEVYGLLGSVLTIKKESE) are repression domain 4.

As to quaternary structure, interacts with RARA and RXRB homodimers and RARA/RXRB heterodimers in the presence of ligand. Interacts with HDAC1 and HDAC3 via its N-terminal domain. Interacts with NR2C1 (sumoylated form and via the ligand-binding domain); the interaction results in promoting the repressor activity of NR2C1. Interacts with CTBP1, CTBP2, ESR1, HDAC1, HDAC2, HDAC5, HDAC6, NR2C2, NR3C1, NR3C2, YWHAH, JUN and FOS. Found in a complex with both NR3C1 and YWHAH. Interacts with ZNF366. Interacts with RORA. Post-translationally, acetylation regulates its nuclear translocation and corepressive activity. Acetylation abolishes interaction with CTBP1. Phosphorylation enhances interaction with YWHAH.

It is found in the nucleus. Functionally, modulates transcriptional activation by steroid receptors such as NR3C1, NR3C2 and ESR1. Also modulates transcriptional repression by nuclear hormone receptors. Positive regulator of the circadian clock gene expression: stimulates transcription of BMAL1, CLOCK and CRY1 by acting as a coactivator for RORA and RORC. Involved in the regulation of ovarian function. Plays a role in renal development. The sequence is that of Nuclear receptor-interacting protein 1 (NRIP1) from Homo sapiens (Human).